Here is a 494-residue protein sequence, read N- to C-terminus: MTVATGDPSDEAAAHPGNPAEYDPDADHECCERVVINISGLRFETQLKTLSQFPDTLLGDPKKRMRYFDPLRNEYFFDRSRTSFDAILYFYQSGGRLRRPANVTLDIFSEEIRFYELGDEAIELFREDEGFVKEEERPLPDNEFQRQVWLLFEYPESSGPARIIAIISVMVILISIVSFCLETLPIFRNDDDEPHSVFDTNTNTTIYFTSTYFTDPFFILETLCIIWFSFEFLVRLFACPSKSGFFGNVMNIIDVVAIIPYFITLATELAEKPEDGQAGQQAMSLAILRVIRLVRVFRIFKLSRHSKGLQILGQTLKASMRELGLLIFFLFIGVILFSSAVYFAEADEPESQFESIPDAFWWAVVSMTTVGYGDMVPTTIGGKIVGSLCAIAGVLTIALPVPVIVSNFNYFYHRETEGEEQAQCLGPVTKEDSNEELKKSRSGSTISKSDYMEIQEGVNNTIEDIPEENLKTQANCTTLANTNYVNITKMLTDV.

Residues methionine 1–aspartate 25 are disordered. The tetramerization domain stretch occupies residues methionine 1–leucine 124. Residues methionine 1–glycine 159 lie on the Cytoplasmic side of the membrane. The helical transmembrane segment at proline 160–leucine 181 threads the bilayer. Residues glutamate 182–proline 216 lie on the Extracellular side of the membrane. Asparagine 203 is a glycosylation site (N-linked (GlcNAc...) asparagine). The helical transmembrane segment at phenylalanine 217–alanine 238 threads the bilayer. Cysteine 239 carries the S-palmitoyl cysteine lipid modification. At cysteine 239–valine 249 the chain is on the cytoplasmic side. A helical transmembrane segment spans residues methionine 250–alanine 270. The Extracellular segment spans residues glutamate 271–serine 284. Residues leucine 285–histidine 305 form a helical; Voltage-sensor membrane-spanning segment. Topologically, residues serine 306–methionine 320 are cytoplasmic. The S4-S5 linker stretch occupies residues lysine 307–methionine 320. Residues arginine 321 to tyrosine 342 form a helical membrane-spanning segment. The Extracellular segment spans residues phenylalanine 343–isoleucine 356. The segment at residues proline 357 to threonine 368 is an intramembrane region (helical). The short motif at threonine 369 to aspartate 374 is the Selectivity filter element. An intramembrane segment occupies threonine 369–valine 376. At proline 377–lysine 383 the chain is on the extracellular side. The helical transmembrane segment at isoleucine 384 to tyrosine 412 threads the bilayer. At histidine 413 to valine 494 the chain is on the cytoplasmic side. Positions threonine 492 to valine 494 match the PDZ-binding motif.

The protein belongs to the potassium channel family. A (Shaker) (TC 1.A.1.2) subfamily. Kv1.2/KCNA2 sub-subfamily. Homotetramer and heterotetramer with other family members. In terms of tissue distribution, expressed in oligodendrocytes.

Its subcellular location is the cell membrane. The catalysed reaction is K(+)(in) = K(+)(out). Voltage-gated potassium channel that mediates transmembrane potassium transport in excitable membranes, primarily in the brain and central nervous system. Prevents aberrant action potential firing and regulates neuronal output. Forms tetrameric potassium-selective channels through which potassium ions pass in accordance with their electrochemical gradient. The channel alternates between opened and closed conformations in response to the voltage difference across the membrane. Can form functional homotetrameric channels and heterotetrameric channels with other family members; the channels characteristics depend critically on the types of channel-forming alpha subunits that are present. Channel properties are modulated by cytoplasmic beta subunits that regulate the subcellular location of the alpha subunits. In vivo, membranes probably contain a mixture of heteromeric potassium channel complexes, making it difficult to assign currents observed in intact tissues to any particular potassium channel family member. Homotetrameric KCNA2 forms a delayed-rectifier potassium channel that opens in response to membrane depolarization, followed by slow spontaneous channel closure. Regulates neuronal excitability and plays a role as pacemaker in the regulation of neuronal action potentials. KCNA2-containing channels play a presynaptic role and prevent hyperexcitability and aberrant action potential firing. Response to toxins that are selective for KCNA2-containing potassium channels suggests that in Purkinje cells, dendritic subthreshold KCNA2-containing potassium channels prevent random spontaneous calcium spikes, suppressing dendritic hyperexcitability without hindering the generation of somatic action potentials, and thereby play an important role in motor coordination. Plays a role in the induction of long-term potentiation of neuron excitability in the CA3 layer of the hippocampus. The chain is Potassium voltage-gated channel subfamily A member 2 (kcna2) from Oncorhynchus mykiss (Rainbow trout).